Here is a 274-residue protein sequence, read N- to C-terminus: 3-methyl-2-oxobutanoate hydroxymethyltransferase (274 aa).

Residues Asp-46 and Asp-85 each coordinate Mg(2+). Residues 46 to 47 (DS), Asp-85, and Lys-115 contribute to the 3-methyl-2-oxobutanoate site. Position 117 (Glu-117) interacts with Mg(2+). The Proton acceptor role is filled by Glu-184.

Belongs to the PanB family. In terms of assembly, homodecamer; pentamer of dimers. Mg(2+) is required as a cofactor.

The protein localises to the cytoplasm. The enzyme catalyses 3-methyl-2-oxobutanoate + (6R)-5,10-methylene-5,6,7,8-tetrahydrofolate + H2O = 2-dehydropantoate + (6S)-5,6,7,8-tetrahydrofolate. Its pathway is cofactor biosynthesis; (R)-pantothenate biosynthesis; (R)-pantoate from 3-methyl-2-oxobutanoate: step 1/2. Functionally, catalyzes the reversible reaction in which hydroxymethyl group from 5,10-methylenetetrahydrofolate is transferred onto alpha-ketoisovalerate to form ketopantoate. This Thermoanaerobacter pseudethanolicus (strain ATCC 33223 / 39E) (Clostridium thermohydrosulfuricum) protein is 3-methyl-2-oxobutanoate hydroxymethyltransferase.